Reading from the N-terminus, the 450-residue chain is MELLKLNSSVQGPGPGSGSSLCHPGVSLLNSSSAGNLSCEPPRIRGTGTRELELAIRITLYAVIFLMSIGGNMLIIVVLGLSRRLRTVTNAFLLSLAVSDLLLAVACMPFTLLPNLMGTFIFGTVICKAVSYLMGVSVSVSTLNLVAIALERYSAICRPLQARVWQTRSHAARVILATWLLSGLLMVPYPVYTVVQPVGPRVLQCMHRWPSARVRQTWSVLLLMLLFFIPGVVMAVAYGLISRELYLGLRFDGDNDSDTQSRVRNQGGLPGGTAPGPVHQNGGCRHVTVAGEDNDGCYVQLPRSRLEMTTLTTPTPGPGLASANQAKLLAKKRVVRMLLVIVLLFFLCWLPIYSANTWCAFDGPGAHRALSGAPISFIHLLSYASACVNPLVYCFMHRRFRQACLDTCARCCPRPPRARPRPLPDEDPPTPSIASLSRLSYTTISTLGPG.

Over 1–57 the chain is Extracellular; it reads MELLKLNSSVQGPGPGSGSSLCHPGVSLLNSSSAGNLSCEPPRIRGTGTRELELAIR. N-linked (GlcNAc...) asparagine glycosylation is found at Asn7, Asn30, and Asn36. The helical transmembrane segment at 58–79 threads the bilayer; it reads ITLYAVIFLMSIGGNMLIIVVL. Residues 80-87 lie on the Cytoplasmic side of the membrane; that stretch reads GLSRRLRT. A helical transmembrane segment spans residues 88–109; it reads VTNAFLLSLAVSDLLLAVACMP. The Extracellular segment spans residues 110–131; that stretch reads FTLLPNLMGTFIFGTVICKAVS. Cys127 and Cys205 form a disulfide bridge. The chain crosses the membrane as a helical span at residues 132-150; sequence YLMGVSVSVSTLNLVAIAL. The Cytoplasmic portion of the chain corresponds to 151 to 170; the sequence is ERYSAICRPLQARVWQTRSH. Residues 171 to 189 traverse the membrane as a helical segment; it reads AARVILATWLLSGLLMVPY. Residues 190-219 lie on the Extracellular side of the membrane; the sequence is PVYTVVQPVGPRVLQCMHRWPSARVRQTWS. A helical transmembrane segment spans residues 220-242; that stretch reads VLLLMLLFFIPGVVMAVAYGLIS. Topologically, residues 243 to 336 are cytoplasmic; that stretch reads RELYLGLRFD…KLLAKKRVVR (94 aa). Positions 258 to 277 are disordered; the sequence is DTQSRVRNQGGLPGGTAPGP. A helical membrane pass occupies residues 337–358; that stretch reads MLLVIVLLFFLCWLPIYSANTW. At 359–376 the chain is on the extracellular side; it reads CAFDGPGAHRALSGAPIS. Residues 377–397 traverse the membrane as a helical segment; sequence FIHLLSYASACVNPLVYCFMH. The Cytoplasmic portion of the chain corresponds to 398 to 450; sequence RRFRQACLDTCARCCPRPPRARPRPLPDEDPPTPSIASLSRLSYTTISTLGPG. Cys411 is lipidated: S-palmitoyl cysteine.

It belongs to the G-protein coupled receptor 1 family. Stomach and brain.

Its subcellular location is the cell membrane. Receptor for gastrin and cholecystokinin. The CCK-B receptors occur throughout the central nervous system where they modulate anxiety, analgesia, arousal, and neuroleptic activity. This receptor mediates its action by association with G proteins that activate a phosphatidylinositol-calcium second messenger system. The chain is Gastrin/cholecystokinin type B receptor (CCKBR) from Mastomys natalensis (African soft-furred rat).